Reading from the N-terminus, the 578-residue chain is Isocitrate dehydrogenase kinase/phosphatase (578 aa).

Residues 315–321 (APGIRGM) and Lys-336 each bind ATP. Asp-371 is an active-site residue.

The protein belongs to the AceK family.

The protein localises to the cytoplasm. It catalyses the reaction L-seryl-[isocitrate dehydrogenase] + ATP = O-phospho-L-seryl-[isocitrate dehydrogenase] + ADP + H(+). Its function is as follows. Bifunctional enzyme which can phosphorylate or dephosphorylate isocitrate dehydrogenase (IDH) on a specific serine residue. This is a regulatory mechanism which enables bacteria to bypass the Krebs cycle via the glyoxylate shunt in response to the source of carbon. When bacteria are grown on glucose, IDH is fully active and unphosphorylated, but when grown on acetate or ethanol, the activity of IDH declines drastically concomitant with its phosphorylation. The sequence is that of Isocitrate dehydrogenase kinase/phosphatase from Shigella boydii serotype 18 (strain CDC 3083-94 / BS512).